We begin with the raw amino-acid sequence, 291 residues long: Geranyl diphosphate 2-C-methyltransferase (291 aa).

This sequence belongs to the geranyl diphosphate 2-C-methyltransferase family. Mg(2+) is required as a cofactor.

It catalyses the reaction (2E)-geranyl diphosphate + S-adenosyl-L-methionine = (E)-2-methylgeranyl diphosphate + S-adenosyl-L-homocysteine + H(+). In terms of biological role, catalyzes the SAM-dependent methylation of geranyl diphosphate (GPP) to yield (E)-2-methylgeranyl diphosphate (2-MeGPP). The protein is Geranyl diphosphate 2-C-methyltransferase of Streptomyces ambofaciens (strain ATCC 23877 / 3486 / DSM 40053 / JCM 4204 / NBRC 12836 / NRRL B-2516).